We begin with the raw amino-acid sequence, 173 residues long: MPRSMKNDNFIDKTFTVMADLILKLLPGVSSEQKKAFAYYRDGMAAQSEGEYAEALENYREALALEQGEEDRSYILYNMGLIYQSNGELDKALEYYHQALELNPRLCSALNNIAVLLHHKGELSLQAGDEETAEALFNEAAQYWIRAIRIAPNNYIEAQNWLKTTGRANLEVY.

3 TPR repeats span residues 36–69, 73–106, and 121–154; these read AFAYYRDGMAAQSEGEYAEALENYREALALEQGE, SYILYNMGLIYQSNGELDKALEYYHQALELNPRL, and GELSLQAGDEETAEALFNEAAQYWIRAIRIAPNN.

This sequence belongs to the Ycf3 family.

The protein localises to the cellular thylakoid membrane. In terms of biological role, essential for the assembly of the photosystem I (PSI) complex. May act as a chaperone-like factor to guide the assembly of the PSI subunits. The protein is Photosystem I assembly protein Ycf3 of Synechococcus sp. (strain JA-2-3B'a(2-13)) (Cyanobacteria bacterium Yellowstone B-Prime).